The primary structure comprises 504 residues: Sodium-coupled neutral amino acid symporter 2 (504 aa).

The tract at residues Met-1–Thr-28 is disordered. Residues Met-1–Ser-79 are Cytoplasmic-facing. Positions Met-1–Met-99 are regulates protein turnover upon amino acid deprivation. A compositionally biased stretch (low complexity) spans Ser-19–Thr-28. The chain crosses the membrane as a helical span at residues Val-80–Met-99. Na(+) is bound at residue Asn-85. The Extracellular portion of the chain corresponds to Ala-100–Ala-105. Residues Met-106–Leu-126 traverse the membrane as a helical segment. Over Lys-127–Asn-161 the chain is Cytoplasmic. Residues Phe-162–Ile-180 traverse the membrane as a helical segment. The Extracellular segment spans residues Arg-181–Asn-189. The helical transmembrane segment at Ala-190–Leu-210 threads the bilayer. Residues Ser-211–Tyr-218 lie on the Cytoplasmic side of the membrane. A helical transmembrane segment spans residues Leu-219–Tyr-239. Residues Lys-240 to Thr-285 lie on the Extracellular side of the membrane. An intrachain disulfide couples Cys-246 to Cys-274. Residues Asn-254 and Asn-258 are each glycosylated (N-linked (GlcNAc...) asparagine). Residues Val-286–Tyr-306 form a helical membrane-spanning segment. At Glu-307–Asn-322 the chain is on the cytoplasmic side. Residues Val-323–Phe-343 traverse the membrane as a helical segment. Over Asn-344–Val-364 the chain is Extracellular. A helical transmembrane segment spans residues Leu-365–Phe-385. Thr-379 is a Na(+) binding site. Topologically, residues Pro-386–His-406 are cytoplasmic. The helical transmembrane segment at Ile-407–Ile-427 threads the bilayer. At Arg-428–Asp-429 the chain is on the extracellular side. Residues Ile-430–Phe-450 form a helical membrane-spanning segment. The Cytoplasmic portion of the chain corresponds to Tyr-451–Lys-465. The chain crosses the membrane as a helical span at residues Ile-466–Met-488. The Extracellular portion of the chain corresponds to Asp-489–His-504.

It belongs to the amino acid/polyamine transporter 2 family.

The protein localises to the cell membrane. The enzyme catalyses L-alanine(in) + Na(+)(in) = L-alanine(out) + Na(+)(out). It carries out the reaction glycine(in) + Na(+)(in) = glycine(out) + Na(+)(out). It catalyses the reaction L-serine(in) + Na(+)(in) = L-serine(out) + Na(+)(out). The catalysed reaction is L-proline(in) + Na(+)(in) = L-proline(out) + Na(+)(out). The enzyme catalyses L-methionine(in) + Na(+)(in) = L-methionine(out) + Na(+)(out). It carries out the reaction L-histidine(in) + Na(+)(in) = L-histidine(out) + Na(+)(out). It catalyses the reaction L-asparagine(in) + Na(+)(in) = L-asparagine(out) + Na(+)(out). The catalysed reaction is L-glutamine(in) + Na(+)(in) = L-glutamine(out) + Na(+)(out). The enzyme catalyses L-threonine(in) + Na(+)(in) = L-threonine(out) + Na(+)(out). It carries out the reaction L-leucine(in) + Na(+)(in) = L-leucine(out) + Na(+)(out). It catalyses the reaction L-phenylalanine(in) + Na(+)(in) = L-phenylalanine(out) + Na(+)(out). With respect to regulation, inhibited by N-methyl-D-glucamine. Inhibited by choline. Allosteric regulation of sodium ions binding by pH. In terms of biological role, symporter that cotransports neutral amino acids and sodium ions from the extracellular to the intracellular side of the cell membrane. The transport is pH-sensitive, Li(+)-intolerant, electrogenic, driven by the Na(+) electrochemical gradient and cotransports of neutral amino acids and sodium ions with a stoichiometry of 1:1. The chain is Sodium-coupled neutral amino acid symporter 2 from Danio rerio (Zebrafish).